The chain runs to 266 residues: Zinc transporter ZupT (266 aa).

A run of 8 helical transmembrane segments spans residues 8–28 (LALTLLAGISTGIGSLLALMV), 35–55 (FLTFALGFSAGIMLYVSFVEI), 70–90 (HAAGWITTAAFFGGMLFIWLI), 123–143 (GIFTAAAIAIHNFPEGLAVFF), 152–172 (GVVIAATIALHNIPEGMAVAV), 185–205 (FSYSFLSGLAEPLGAIIGYAL), 209–229 (FLSPLVFACVLGGVAGIMVYI), and 246–266 (IAISGLILGMGVMAVSLLMLA). Residues Asn-134 and Glu-137 each contribute to the Fe(2+) site. Zn(2+) is bound by residues Glu-137 and His-162. Residues Asn-163, Glu-166, and Glu-195 each coordinate Fe(2+). Residue Glu-166 participates in Zn(2+) binding.

It belongs to the ZIP transporter (TC 2.A.5) family. ZupT subfamily.

The protein localises to the cell inner membrane. The enzyme catalyses Zn(2+)(in) = Zn(2+)(out). In terms of biological role, mediates zinc uptake. May also transport other divalent cations. This chain is Zinc transporter ZupT, found in Chlorobium limicola (strain DSM 245 / NBRC 103803 / 6330).